Here is a 1724-residue protein sequence, read N- to C-terminus: Protein mono-ADP-ribosyltransferase PARP4 (1724 aa).

The 94-residue stretch at 1 to 94 folds into the BRCT domain; the sequence is MVMGIFANCI…RLLDVKNYDP (94 aa). The short motif at 19–25 is the Nuclear localization signal element; it reads PQQQKKK. The disordered stretch occupies residues 97–123; that stretch reads PLDITPPPDQKASSSEVKTEGLCPDSA. Phosphothreonine is present on residues Thr-101 and Thr-333. Residues 242–370 enclose the PARP alpha-helical domain; the sequence is SEQLQALLLE…ETNLSKPNPP (129 aa). Positions 369–573 constitute a PARP catalytic domain; that stretch reads PPSLAKYRAL…FSMPGDQIKD (205 aa). In terms of domain architecture, VIT spans 607-735; it reads SSTKAGLQDA…KVLIKITYIT (129 aa). The VWFA domain maps to 876-1046; that stretch reads EVIICLDCSS…KQIEDQMTRL (171 aa). The residue at position 1236 (Ser-1236) is a Phosphoserine. The Nuclear localization signal signature appears at 1237–1249; the sequence is KRKHRKIPFSKRK. Position 1335 is a phosphoserine (Ser-1335). Residues 1408 to 1452 are disordered; it reads SAQSAPLQHPGGFTTRPSAGTFPELDSPQLHFSLPTDPDPIRGFG. At Arg-1476 the chain carries Asymmetric dimethylarginine. Ser-1504 carries the post-translational modification Phosphoserine. The interval 1562–1724 is interaction with the major vault protein; sequence VCIQHWQDAV…LHRVLHYSQG (163 aa).

It belongs to the ARTD/PARP family. In terms of assembly, component of the vault ribonucleoprotein particle, at least composed of MVP, PARP4 and one or more vault RNAs (vRNAs). Interacts with TEP1. Widely expressed; the highest levels are in the kidney; also detected in heart, placenta, lung, liver, skeletal muscle, spleen, leukocytes and pancreas.

Its subcellular location is the cytoplasm. The protein resides in the nucleus. It localises to the cytoskeleton. The protein localises to the spindle. The catalysed reaction is L-aspartyl-[protein] + NAD(+) = 4-O-(ADP-D-ribosyl)-L-aspartyl-[protein] + nicotinamide. The enzyme catalyses L-glutamyl-[protein] + NAD(+) = 5-O-(ADP-D-ribosyl)-L-glutamyl-[protein] + nicotinamide. Its function is as follows. Mono-ADP-ribosyltransferase that mediates mono-ADP-ribosylation of target proteins. The polypeptide is Protein mono-ADP-ribosyltransferase PARP4 (Homo sapiens (Human)).